Reading from the N-terminus, the 188-residue chain is Aspartic protease inhibitor 11 (188 aa).

The N-linked (GlcNAc...) asparagine glycan is linked to Asn19. 3 disulfides stabilise this stretch: Cys48–Cys93, Cys142–Cys159, and Cys150–Cys153.

This sequence belongs to the protease inhibitor I3 (leguminous Kunitz-type inhibitor) family.

The protein resides in the vacuole. Its function is as follows. Inhibitor of cathepsin D (aspartic protease) and trypsin (serine protease). May protect the plant by inhibiting proteases of invading organisms. The protein is Aspartic protease inhibitor 11 of Solanum tuberosum (Potato).